The following is a 414-amino-acid chain: Dihydroorotase (414 aa).

The Zn(2+) site is built by histidine 57 and histidine 59. Substrate is bound by residues 59–61 (HLR) and asparagine 91. Residues lysine 135, histidine 164, histidine 204, and aspartate 272 each contribute to the Zn(2+) site. An N6-carboxylysine modification is found at lysine 135. Aspartate 272 is a catalytic residue. Substrate is bound by residues histidine 276 and 286-287 (AG).

Belongs to the metallo-dependent hydrolases superfamily. DHOase family. Class I DHOase subfamily. It depends on Zn(2+) as a cofactor.

It carries out the reaction (S)-dihydroorotate + H2O = N-carbamoyl-L-aspartate + H(+). It participates in pyrimidine metabolism; UMP biosynthesis via de novo pathway; (S)-dihydroorotate from bicarbonate: step 3/3. Catalyzes the reversible cyclization of carbamoyl aspartate to dihydroorotate. The polypeptide is Dihydroorotase (Pyrococcus furiosus (strain ATCC 43587 / DSM 3638 / JCM 8422 / Vc1)).